The chain runs to 140 residues: Large ribosomal subunit protein uL16 (140 aa).

Belongs to the universal ribosomal protein uL16 family. In terms of assembly, part of the 50S ribosomal subunit.

Its function is as follows. Binds 23S rRNA and is also seen to make contacts with the A and possibly P site tRNAs. This is Large ribosomal subunit protein uL16 from Onion yellows phytoplasma (strain OY-M).